Reading from the N-terminus, the 108-residue chain is Nucleoid-associated protein ACP_0492 (108 aa).

This sequence belongs to the YbaB/EbfC family. In terms of assembly, homodimer.

It localises to the cytoplasm. It is found in the nucleoid. In terms of biological role, binds to DNA and alters its conformation. May be involved in regulation of gene expression, nucleoid organization and DNA protection. The sequence is that of Nucleoid-associated protein ACP_0492 from Acidobacterium capsulatum (strain ATCC 51196 / DSM 11244 / BCRC 80197 / JCM 7670 / NBRC 15755 / NCIMB 13165 / 161).